Consider the following 91-residue polypeptide: Class I hydrophobin E (91 aa).

The first 16 residues, 1–16, serve as a signal peptide directing secretion; sequence MKFSIAAIALAAVAVA. 4 cysteine pairs are disulfide-bonded: Cys-30/Cys-72, Cys-42/Cys-64, Cys-43/Cys-55, and Cys-73/Cys-89. N-linked (GlcNAc...) asparagine glycosylation is present at Asn-83.

It belongs to the fungal hydrophobin family.

Its subcellular location is the secreted. It is found in the cell wall. It localises to the vacuole. The protein resides in the cytoplasmic vesicle. Functionally, aerial growth, conidiation, and dispersal of filamentous fungi in the environment rely upon a capability of their secreting small amphipathic proteins called hydrophobins (HPBs) with low sequence identity. Class I can self-assemble into an outermost layer of rodlet bundles on aerial cell surfaces, conferring cellular hydrophobicity that supports fungal growth, development and dispersal; whereas Class II form highly ordered films at water-air interfaces through intermolecular interactions but contribute nothing to the rodlet structure. Hyd1E contributes to certain cell wall-related features, such as hydrophobicity but is not involved in cell wall-related events during fungal proliferation in host hemocoel. Does not contribute to conidial hydrophobicity. In Beauveria bassiana (strain ARSEF 2860) (White muscardine disease fungus), this protein is Class I hydrophobin E.